A 113-amino-acid polypeptide reads, in one-letter code: Single-stranded DNA-binding protein B (113 aa).

Residues 1-104 (MFNQVMLVGR…VLADTVRFMD (104 aa)) enclose the SSB domain. Residue Y82 is modified to Phosphotyrosine.

In terms of assembly, homotetramer. In terms of processing, phosphorylated by YwqD, which increases ssDNA affinity; dephosphorylated by YwqE.

Its subcellular location is the cytoplasm. Functionally, not essential for replication of the chromosome, but is required for optimal competence. Binds ssDNA, binding is facilitated by DprA, acts as an accessory factor for homologous DNA strand exchange. The polypeptide is Single-stranded DNA-binding protein B (ssbB) (Bacillus subtilis (strain 168)).